The chain runs to 666 residues: Probable cytochrome c oxidase subunit 1 (666 aa).

Transmembrane regions (helical) follow at residues 16 to 36 (IPLI…VWVV) and 57 to 77 (IGVM…SDAI). His105 lines the heme b pocket. The next 13 membrane-spanning stretches (helical) occupy residues 108-128 (IMIF…VVPL), 142-162 (SVGF…LVIG), 192-212 (SLQI…TTVL), 234-254 (SNLL…MLLL), 277-297 (LIWA…FGIF), 315-335 (MVLA…HHFF), 346-366 (IFGI…YNWL), 380-400 (MLWA…GVLV), 413-433 (MFLV…GAFA), 456-476 (FWFT…AGML), 493-513 (WMLV…CQIM), 591-611 (SPTG…LIWH), and 612-632 (IWWM…VFAW). 4 residues coordinate Cu cation: His283, Tyr287, His332, and His333. Residues 283–287 (HPEVY) constitute a cross-link (1'-histidyl-3'-tyrosine (His-Tyr)). Heme b contacts are provided by His418 and His420.

The protein belongs to the heme-copper respiratory oxidase family.

It localises to the cell membrane. The catalysed reaction is 4 Fe(II)-[cytochrome c] + O2 + 8 H(+)(in) = 4 Fe(III)-[cytochrome c] + 2 H2O + 4 H(+)(out). Its pathway is energy metabolism; oxidative phosphorylation. The chain is Probable cytochrome c oxidase subunit 1 from Bradyrhizobium diazoefficiens (strain JCM 10833 / BCRC 13528 / IAM 13628 / NBRC 14792 / USDA 110).